The sequence spans 68 residues: Protein transport protein Sec61 subunit gamma (68 aa).

Over 1–32 (MDQVMAWVEPGKQFAKDSIRLVKRCTKPDRKE) the chain is Cytoplasmic. A helical transmembrane segment spans residues 33–61 (FQKIAVATAIGFAIMGFIGFFVKLIHIPI). Residues 62 to 68 (NNIIVGS) are Extracellular-facing.

Belongs to the SecE/SEC61-gamma family. In terms of assembly, heterotrimeric complex composed of SEC61-alpha, SEC61-beta and SEC61-gamma. Component of the ribosome-associated ER translocon complex.

Its subcellular location is the endoplasmic reticulum membrane. Functionally, necessary for protein translocation in the endoplasmic reticulum and multi-pass membrane protein biogenesis. In Ciona intestinalis (Transparent sea squirt), this protein is Protein transport protein Sec61 subunit gamma (SEC61G).